Here is a 1050-residue protein sequence, read N- to C-terminus: DNA-directed RNA polymerase subunit beta (1050 aa).

Belongs to the RNA polymerase beta chain family. As to quaternary structure, in plastids the minimal PEP RNA polymerase catalytic core is composed of four subunits: alpha, beta, beta', and beta''. When a (nuclear-encoded) sigma factor is associated with the core the holoenzyme is formed, which can initiate transcription (Potential).

It localises to the plastid. The protein localises to the apicoplast. The catalysed reaction is RNA(n) + a ribonucleoside 5'-triphosphate = RNA(n+1) + diphosphate. DNA-dependent RNA polymerase catalyzes the transcription of DNA into RNA using the four ribonucleoside triphosphates as substrates. This Neospora caninum (Coccidian parasite) protein is DNA-directed RNA polymerase subunit beta (rpoB).